The primary structure comprises 317 residues: Large ribosomal subunit protein uL10 (317 aa).

At Y24 the chain carries Phosphotyrosine. Position 59 is a phosphothreonine (T59). Residue K264 forms a Glycyl lysine isopeptide (Lys-Gly) (interchain with G-Cter in ubiquitin) linkage. Residues 294–317 (APAKVEAKEESEESDEDMGFGLFD) are disordered. Residue K297 forms a Glycyl lysine isopeptide (Lys-Gly) (interchain with G-Cter in SUMO1); alternate linkage. K297 is covalently cross-linked (Glycyl lysine isopeptide (Lys-Gly) (interchain with G-Cter in SUMO2); alternate). Positions 302 to 311 (EESEESDEDM) are enriched in acidic residues. A phosphoserine mark is found at S304 and S307.

It belongs to the universal ribosomal protein uL10 family. P0 forms a pentameric complex by interaction with dimers of P1 and P2. Identified in a IGF2BP1-dependent mRNP granule complex containing untranslated mRNAs. Interacts with APEX1. Interacts with FMR1 isoform 6. Ubiquitinated at Lys-264 by RNF14 and RNF25 in response to ribosome collisions (ribosome stalling).

It is found in the nucleus. It localises to the cytoplasm. In terms of biological role, ribosomal protein P0 is the functional equivalent of E.coli protein L10. This is Large ribosomal subunit protein uL10 (RPLP0) from Homo sapiens (Human).